Consider the following 702-residue polypeptide: Elongation factor G (702 aa).

Residues 8 to 290 (SRYRNIGISA…AVIEYLPSPT (283 aa)) enclose the tr-type G domain. GTP contacts are provided by residues 17–24 (AHIDAGKT), 88–92 (DTPGH), and 142–145 (NKMD).

This sequence belongs to the TRAFAC class translation factor GTPase superfamily. Classic translation factor GTPase family. EF-G/EF-2 subfamily.

Its subcellular location is the cytoplasm. Catalyzes the GTP-dependent ribosomal translocation step during translation elongation. During this step, the ribosome changes from the pre-translocational (PRE) to the post-translocational (POST) state as the newly formed A-site-bound peptidyl-tRNA and P-site-bound deacylated tRNA move to the P and E sites, respectively. Catalyzes the coordinated movement of the two tRNA molecules, the mRNA and conformational changes in the ribosome. The chain is Elongation factor G from Edwardsiella ictaluri (strain 93-146).